The sequence spans 290 residues: Signal recognition particle receptor subunit beta (290 aa).

Residues 44 to 64 traverse the membrane as a helical segment; it reads VLLLALFTLIFIIIISKLFGS. GTP-binding positions include 92-100, 114-117, G140, and A268; these read GLSNAGKTA and THTS.

The protein belongs to the SRP receptor beta subunit family. In terms of assembly, heterodimer of an alpha and a beta chain.

It is found in the endoplasmic reticulum membrane. Its function is as follows. Component of the signal recognition particle (SRP) complex receptor (SR). Ensures, in conjunction with the SRP complex, the correct targeting of the nascent secretory proteins to the endoplasmic reticulum membrane system. May mediate the membrane association of SR. In Dictyostelium discoideum (Social amoeba), this protein is Signal recognition particle receptor subunit beta (srprb).